A 688-amino-acid polypeptide reads, in one-letter code: Amino-acid acetyltransferase, mitochondrial (688 aa).

Residues 1 to 45 constitute a mitochondrion transit peptide; that stretch reads MSSRALTWPRTAKSSLLKQQTSSFVGQPKLGTPNCRSFSSTADRP. Disordered regions lie at residues 1 to 59 and 96 to 119; these read MSSR…SKSY and LKAQ…TVTQ. Polar residues-rich tracts occupy residues 12–25, 34–57, and 106–119; these read AKSS…SSFV, NCRS…SSSK, and TEPT…TVTQ. An N-acetyltransferase domain is found at 509 to 678; that stretch reads NRPRLSLDDP…YEQVCRSIQP (170 aa).

The protein belongs to the acetyltransferase family.

The protein resides in the mitochondrion. The enzyme catalyses L-glutamate + acetyl-CoA = N-acetyl-L-glutamate + CoA + H(+). It functions in the pathway amino-acid biosynthesis; L-arginine biosynthesis; N(2)-acetyl-L-ornithine from L-glutamate: step 1/4. Its function is as follows. N-acetylglutamate synthase involved in arginine biosynthesis. The sequence is that of Amino-acid acetyltransferase, mitochondrial (arg2) from Aspergillus flavus (strain ATCC 200026 / FGSC A1120 / IAM 13836 / NRRL 3357 / JCM 12722 / SRRC 167).